A 29-amino-acid chain; its full sequence is Cytochrome b6-f complex subunit 8 (29 aa).

A helical transmembrane segment spans residues 3 to 23 (MVSLAWAALMVVFTFSLSLVV).

Belongs to the PetN family. In terms of assembly, the 4 large subunits of the cytochrome b6-f complex are cytochrome b6, subunit IV (17 kDa polypeptide, PetD), cytochrome f and the Rieske protein, while the 4 small subunits are PetG, PetL, PetM and PetN. The complex functions as a dimer.

It is found in the plastid. Its subcellular location is the chloroplast thylakoid membrane. Its function is as follows. Component of the cytochrome b6-f complex, which mediates electron transfer between photosystem II (PSII) and photosystem I (PSI), cyclic electron flow around PSI, and state transitions. The chain is Cytochrome b6-f complex subunit 8 from Cucumis sativus (Cucumber).